A 102-amino-acid chain; its full sequence is Small ribosomal subunit protein uS10 (102 aa).

It belongs to the universal ribosomal protein uS10 family. In terms of assembly, part of the 30S ribosomal subunit.

In terms of biological role, involved in the binding of tRNA to the ribosomes. The polypeptide is Small ribosomal subunit protein uS10 (Streptococcus pneumoniae (strain Taiwan19F-14)).